A 1322-amino-acid polypeptide reads, in one-letter code: Phosphoribosylformylglycinamidine synthase (1322 aa).

Residues 307 to 318 (GASTGSGGEIRD) and alanine 678 contribute to the ATP site. Mg(2+)-binding residues include glutamate 718, asparagine 722, and aspartate 886. Residues 1069–1322 (MAILREQGVN…MFRNARVNLG (254 aa)) enclose the Glutamine amidotransferase type-1 domain. Cysteine 1162 acts as the Nucleophile in catalysis. Catalysis depends on residues histidine 1287 and glutamate 1289.

This sequence in the N-terminal section; belongs to the FGAMS family. In terms of assembly, monomer.

Its subcellular location is the cytoplasm. It carries out the reaction N(2)-formyl-N(1)-(5-phospho-beta-D-ribosyl)glycinamide + L-glutamine + ATP + H2O = 2-formamido-N(1)-(5-O-phospho-beta-D-ribosyl)acetamidine + L-glutamate + ADP + phosphate + H(+). The protein operates within purine metabolism; IMP biosynthesis via de novo pathway; 5-amino-1-(5-phospho-D-ribosyl)imidazole from N(2)-formyl-N(1)-(5-phospho-D-ribosyl)glycinamide: step 1/2. In terms of biological role, phosphoribosylformylglycinamidine synthase involved in the purines biosynthetic pathway. Catalyzes the ATP-dependent conversion of formylglycinamide ribonucleotide (FGAR) and glutamine to yield formylglycinamidine ribonucleotide (FGAM) and glutamate. The chain is Phosphoribosylformylglycinamidine synthase from Photobacterium profundum (strain SS9).